We begin with the raw amino-acid sequence, 387 residues long: Probable tRNA sulfurtransferase (387 aa).

The 101-residue stretch at 67-167 (SLLKNLFTRL…KEHFLIISES (101 aa)) folds into the THUMP domain. ATP is bound by residues 185–186 (LL), 210–211 (TF), Arg-269, Gly-287, and Gln-296.

Belongs to the ThiI family.

It is found in the cytoplasm. It carries out the reaction [ThiI sulfur-carrier protein]-S-sulfanyl-L-cysteine + a uridine in tRNA + 2 reduced [2Fe-2S]-[ferredoxin] + ATP + H(+) = [ThiI sulfur-carrier protein]-L-cysteine + a 4-thiouridine in tRNA + 2 oxidized [2Fe-2S]-[ferredoxin] + AMP + diphosphate. The catalysed reaction is [ThiS sulfur-carrier protein]-C-terminal Gly-Gly-AMP + S-sulfanyl-L-cysteinyl-[cysteine desulfurase] + AH2 = [ThiS sulfur-carrier protein]-C-terminal-Gly-aminoethanethioate + L-cysteinyl-[cysteine desulfurase] + A + AMP + 2 H(+). It participates in cofactor biosynthesis; thiamine diphosphate biosynthesis. In terms of biological role, catalyzes the ATP-dependent transfer of a sulfur to tRNA to produce 4-thiouridine in position 8 of tRNAs, which functions as a near-UV photosensor. Also catalyzes the transfer of sulfur to the sulfur carrier protein ThiS, forming ThiS-thiocarboxylate. This is a step in the synthesis of thiazole, in the thiamine biosynthesis pathway. The sulfur is donated as persulfide by IscS. The sequence is that of Probable tRNA sulfurtransferase from Mycoplasma pneumoniae (strain ATCC 29342 / M129 / Subtype 1) (Mycoplasmoides pneumoniae).